The following is a 513-amino-acid chain: Noroxomaritidine synthase 2 (513 aa).

The chain crosses the membrane as a helical span at residues 14 to 34; the sequence is HYPEILIAIACFLIFSLLLSA. Heme is bound at residue Cys-458.

This sequence belongs to the cytochrome P450 family. The cofactor is heme.

It is found in the membrane. The enzyme catalyses 4'-O-methylnorbelladine + reduced [NADPH--hemoprotein reductase] + O2 = (10bR,4aS)-noroxomaritidine + oxidized [NADPH--hemoprotein reductase] + 2 H2O + H(+). It catalyses the reaction 4'-O-methylnorbelladine + reduced [NADPH--hemoprotein reductase] + O2 = (10bS,4aR)-noroxomaritidine + oxidized [NADPH--hemoprotein reductase] + 2 H2O + H(+). It functions in the pathway alkaloid biosynthesis. In terms of biological role, cytochrome P450 that catalyzes an intramolecular para-para' C-C phenol coupling of 4'-O-methylnorbelladine in alkaloids biosynthesis, including haemanthamine- and crinamine-type alkaloids, promising anticancer agents. Catalyzes the formation of (10bR,4aS)-noroxomaritidine and (10bS,4aR)-noroxomaritidine from 4'-O-methylnorbelladine. The protein is Noroxomaritidine synthase 2 of Narcissus aff. pseudonarcissus MK-2014 (Daffodil).